Reading from the N-terminus, the 489-residue chain is Cytochrome P450 2C41 (489 aa).

C434 contributes to the heme binding site.

It belongs to the cytochrome P450 family. It depends on heme as a cofactor.

It localises to the endoplasmic reticulum membrane. Its subcellular location is the microsome membrane. The catalysed reaction is an organic molecule + reduced [NADPH--hemoprotein reductase] + O2 = an alcohol + oxidized [NADPH--hemoprotein reductase] + H2O + H(+). Cytochromes P450 are a group of heme-thiolate monooxygenases. In liver microsomes, this enzyme is involved in an NADPH-dependent electron transport pathway. It oxidizes a variety of structurally unrelated compounds, including steroids, fatty acids, and xenobiotics. The protein is Cytochrome P450 2C41 (CYP2C41) of Canis lupus familiaris (Dog).